The following is a 54-amino-acid chain: Rubredoxin (54 aa).

The region spanning 1–54 (MKKYVCVVCGYIYDPAEGDPDNGVNPGTSFEDIPDDWVCPLCGVGKDQFEPSEE) is the Rubredoxin-like domain. Positions 6, 9, 39, and 42 each coordinate Fe cation.

It belongs to the rubredoxin family. It depends on Fe(3+) as a cofactor.

Rubredoxin is a small nonheme, iron protein lacking acid-labile sulfide. Its single Fe, chelated to 4 Cys, functions as an electron acceptor and may also stabilize the conformation of the molecule. Functions as an intermediate component in the electron transfer chain: NADH-&gt;NROR-&gt;Rd-&gt;FprA1/2 in which Rd serves as the proximal electron donor to the FDPs that exhibit H(2)O-forming NADH oxidase activity. Also functions as the proximal electron donor to the Dfx and revRbr proteins that display superoxide reductase (SOR) and NADH peroxidase activity, respectively. Therefore, is a key electron carrier in an efficient multienzyme complex that can scavenge O(2) and reactive oxygen species (ROS), and thus plays an important role in the oxidative stress defense system in C.acetobutylicum, an obligate anaerobic bacterium. This is Rubredoxin (rd) from Clostridium acetobutylicum (strain ATCC 824 / DSM 792 / JCM 1419 / IAM 19013 / LMG 5710 / NBRC 13948 / NRRL B-527 / VKM B-1787 / 2291 / W).